Consider the following 311-residue polypeptide: 4-diphosphocytidyl-2-C-methyl-D-erythritol kinase (311 aa).

K10 is an active-site residue. Residue 105 to 115 participates in ATP binding; the sequence is PVAGGMAGGSA. Residue D146 is part of the active site.

It belongs to the GHMP kinase family. IspE subfamily.

The enzyme catalyses 4-CDP-2-C-methyl-D-erythritol + ATP = 4-CDP-2-C-methyl-D-erythritol 2-phosphate + ADP + H(+). It functions in the pathway isoprenoid biosynthesis; isopentenyl diphosphate biosynthesis via DXP pathway; isopentenyl diphosphate from 1-deoxy-D-xylulose 5-phosphate: step 3/6. Catalyzes the phosphorylation of the position 2 hydroxy group of 4-diphosphocytidyl-2C-methyl-D-erythritol. In Corynebacterium glutamicum (strain ATCC 13032 / DSM 20300 / JCM 1318 / BCRC 11384 / CCUG 27702 / LMG 3730 / NBRC 12168 / NCIMB 10025 / NRRL B-2784 / 534), this protein is 4-diphosphocytidyl-2-C-methyl-D-erythritol kinase.